The sequence spans 425 residues: Serine--tRNA ligase 2 (425 aa).

234–236 contacts L-serine; that stretch reads TAE. An ATP-binding site is contributed by 265–267; that stretch reads RVE. Residue E288 participates in L-serine binding. 352–355 contacts ATP; it reads EVSS. S388 serves as a coordination point for L-serine.

The protein belongs to the class-II aminoacyl-tRNA synthetase family. Type-1 seryl-tRNA synthetase subfamily. In terms of assembly, homodimer. The tRNA molecule binds across the dimer.

It localises to the cytoplasm. The enzyme catalyses tRNA(Ser) + L-serine + ATP = L-seryl-tRNA(Ser) + AMP + diphosphate + H(+). The catalysed reaction is tRNA(Sec) + L-serine + ATP = L-seryl-tRNA(Sec) + AMP + diphosphate + H(+). The protein operates within aminoacyl-tRNA biosynthesis; selenocysteinyl-tRNA(Sec) biosynthesis; L-seryl-tRNA(Sec) from L-serine and tRNA(Sec): step 1/1. Its function is as follows. Catalyzes the attachment of serine to tRNA(Ser). Is also able to aminoacylate tRNA(Sec) with serine, to form the misacylated tRNA L-seryl-tRNA(Sec), which will be further converted into selenocysteinyl-tRNA(Sec). This chain is Serine--tRNA ligase 2, found in Clostridium acetobutylicum (strain ATCC 824 / DSM 792 / JCM 1419 / IAM 19013 / LMG 5710 / NBRC 13948 / NRRL B-527 / VKM B-1787 / 2291 / W).